Reading from the N-terminus, the 1284-residue chain is Zinc finger protein 423 (1284 aa).

2 disordered regions span residues 1–64 and 87–117; these read MHKK…MEDE and AHRCPGDGDDDPQLSWVASSPSSKDVASPTQ. Over residues 34–46 the composition is skewed to basic and acidic residues; that stretch reads CDQKTSRALEDRN. Phosphoserine occurs at positions 47 and 50. Residues 54–64 are compositionally biased toward acidic residues; that stretch reads RNEDDEDMEDE. The C2H2-type 1; degenerate zinc finger occupies 67–93; it reads YTCDHCQQDFESLADLTDHRAHRCPGD. A compositionally biased stretch (polar residues) spans 102 to 117; it reads WVASSPSSKDVASPTQ. C2H2-type zinc fingers lie at residues 138–160, 166–188, 194–216, 222–244, 263–286, 295–318, and 323–345; these read YPCQFCDKSFIRLSYLKRHEQIH, FKCTYCSRLFKHKRSRDRHIKLH, YHCHECEAAFSRSDHLKIHLKTH, FKCTVCKRGFSSTSSLQSHMQAH, FMCDYCEDTFSQTEELEKHVLTRH, LQCIHCPEVFVDENTLLAHIHQAH, and HKCPMCPEQFSSVEGVYCHLDSH. Residues 346–398 form a disordered region; that stretch reads RQPDSSNHSVSPDPVLGSVASMSSATPDSSASVERGSTPDSTLKPLRGQKKMR. The span at 363–377 shows a compositional bias: low complexity; the sequence is SVASMSSATPDSSAS. The segment at 409–433 adopts a C2H2-type 9; degenerate zinc-finger fold; that stretch reads YSCPYCSKRDFNSLAVLEIHLKTIH. 3 consecutive C2H2-type zinc fingers follow at residues 441 to 464, 480 to 503, and 517 to 540; these read HTCQICLDSMPTLYNLNEHVRKLH, FHCNYCPEMFADINSLQEHIRVSH, and FFCNQCSMGFLTESSLTEHIQQAH. Residues 563-588 form a C2H2-type 13; atypical zinc finger; it reads YSCPYCTNSPIFGSILKLTKHIKENH. A disordered region spans residues 590-624; it reads NIPLAHSKKSKAEQSPVSSDVEVSSPKRQRLSASA. The residue at position 604 (Ser604) is a Phosphoserine. A compositionally biased stretch (low complexity) spans 604-615; the sequence is SPVSSDVEVSSP. 7 consecutive C2H2-type zinc fingers follow at residues 632–654, 662–684, 692–715, 720–743, 750–773, 781–803, and 807–830; these read YPCNQCDLKFSNFESFQTHLKLH, QACPQCKEDFDSQESLLQHLTVH, YVCESCDKQFSSVDDLQKHLLDMH, YHCTLCQEVFDSKVSIQVHLAVKH, YRCTACNWDFRKEADLQVHVKHSH, HKCIFCGETFSTEVELQCHITTH, and YNCKFCSKAFHAIILLEKHLREKH. The segment at 886–908 adopts a C2H2-type 21; degenerate zinc-finger fold; the sequence is YGCDICGAAYTMEVLLQNHRLRD. 3 consecutive C2H2-type zinc fingers follow at residues 930–952, 959–981, and 1020–1042; these read HKCNVCSRTFFSENGLREHLQTH, YMCPICGERFPSLLTLTEHKVTH, and FRCVVCMQTVTSTLELKIHGTFH. Ser1054 bears the Phosphoserine mark. Residues 1064–1082 form a C2H2-type 25; degenerate zinc finger; it reads YKCALCLKEFRSKQDLVKL. C2H2-type zinc fingers lie at residues 1120 to 1143, 1168 to 1190, 1198 to 1220, 1229 to 1252, and 1259 to 1282; these read LRCPECSVKFESAEDLESHMQVDH, YQCIKCQMTFENEREIQIHVANH, HECKLCNQMFDSPAKLLCHLIEH, FKCPVCFTVFVQANKLQQHIFAVH, and YDCSQCPQKFFFQTELQNHTMSQH. The span at 1136–1147 shows a compositional bias: basic and acidic residues; the sequence is ESHMQVDHRDLT. The segment at 1136-1163 is disordered; sequence ESHMQVDHRDLTPETSGPRKGTQTSPVP.

The protein belongs to the krueppel C2H2-type zinc-finger protein family. Homodimer. Interacts with EBF1. Interacts with SMAD1 and SMAD4. Interacts with PARP1. Interacts with CEP290. As to expression, expressed in brain, lung, skeletal muscle, heart, pancreas and kidney but not liver or placenta. Also expressed in aorta, ovary, pituitary, small intestine, fetal brain, fetal kidney and, within the adult brain, in the substantia nigra, medulla, amygdala, thalamus and cerebellum.

Its subcellular location is the nucleus. Functionally, transcription factor that can both act as an activator or a repressor depending on the context. Plays a central role in BMP signaling and olfactory neurogenesis. Associates with SMADs in response to BMP2 leading to activate transcription of BMP target genes. Acts as a transcriptional repressor via its interaction with EBF1, a transcription factor involved in terminal olfactory receptor neurons differentiation; this interaction preventing EBF1 to bind DNA and activate olfactory-specific genes. Involved in olfactory neurogenesis by participating in a developmental switch that regulates the transition from differentiation to maturation in olfactory receptor neurons. Controls proliferation and differentiation of neural precursors in cerebellar vermis formation. The chain is Zinc finger protein 423 (ZNF423) from Homo sapiens (Human).